The chain runs to 42 residues: Cytochrome b6-f complex subunit 7 (42 aa).

A helical membrane pass occupies residues 15-35 (IVTAAVTCIFMVLFGLSLGFA).

It belongs to the PetM family. As to quaternary structure, the 4 large subunits of the cytochrome b6-f complex are cytochrome b6, subunit IV (17 kDa polypeptide, PetD), cytochrome f and the Rieske protein, while the 4 small subunits are PetG, PetL, PetM and PetN. The complex functions as a dimer.

The protein localises to the plastid. The protein resides in the chloroplast thylakoid membrane. Component of the cytochrome b6-f complex, which mediates electron transfer between photosystem II (PSII) and photosystem I (PSI), cyclic electron flow around PSI, and state transitions. The chain is Cytochrome b6-f complex subunit 7 from Trieres chinensis (Marine centric diatom).